The primary structure comprises 521 residues: Medium/long-chain-fatty-acid--[acyl-carrier-protein] ligase MbtM (521 aa).

The protein belongs to the ATP-dependent AMP-binding enzyme family.

It catalyses the reaction a long-chain fatty acid + holo-[ACP] + ATP = a long-chain fatty acyl-[ACP] + AMP + diphosphate. The catalysed reaction is a medium-chain fatty acid + holo-[ACP] + ATP = a medium-chain fatty acyl-[ACP] + AMP + diphosphate. It functions in the pathway siderophore biosynthesis; mycobactin biosynthesis. Functionally, activates lipidic moieties required for mycobactin biosynthesis. Converts medium- to long-chain aliphatic fatty acids into acyl adenylate, which is further transferred on to the phosphopantetheine arm of the carrier protein MbtL. This is Medium/long-chain-fatty-acid--[acyl-carrier-protein] ligase MbtM (mbtM) from Mycobacterium sp. (strain MCS).